Reading from the N-terminus, the 226-residue chain is N-acetylmuramic acid 6-phosphate phosphatase (226 aa).

Asp-12 serves as the catalytic Nucleophile. Positions 12, 14, and 171 each coordinate Mg(2+). Asp-14 (proton donor) is an active-site residue.

It belongs to the HAD-like hydrolase superfamily. CbbY/CbbZ/Gph/YieH family. Phosphatase MupP subfamily. Mg(2+) is required as a cofactor.

It catalyses the reaction N-acetyl-D-muramate 6-phosphate + H2O = N-acetyl-D-muramate + phosphate. It participates in cell wall biogenesis; peptidoglycan recycling. In terms of biological role, specifically catalyzes the dephosphorylation of N-acetylmuramate 6-phosphate (MurNAc-6P) to MurNac. Is involved in peptidoglycan recycling as part of a cell wall recycling pathway that bypasses de novo biosynthesis of the peptidoglycan precursor UDP-MurNAc. Plays a role in intrinsic resistance to fosfomycin, which targets the de novo synthesis of UDP-MurNAc. This chain is N-acetylmuramic acid 6-phosphate phosphatase, found in Pseudomonas aeruginosa (strain ATCC 15692 / DSM 22644 / CIP 104116 / JCM 14847 / LMG 12228 / 1C / PRS 101 / PAO1).